The sequence spans 335 residues: GTPase Obg (335 aa).

The 158-residue stretch at 1-158 (MFLDQITIEL…RQVELELKLI (158 aa)) folds into the Obg domain. The OBG-type G domain occupies 159-334 (ADIGLVGFPN…LNSLFTNRLS (176 aa)). Residues 165–172 (GFPNAGKS), 190–194 (FTTLQ), 215–218 (DIPG), 285–288 (NKID), and 315–317 (SGL) contribute to the GTP site. Residues S172 and T192 each contribute to the Mg(2+) site.

It belongs to the TRAFAC class OBG-HflX-like GTPase superfamily. OBG GTPase family. In terms of assembly, monomer. Mg(2+) serves as cofactor.

It localises to the cytoplasm. Functionally, an essential GTPase which binds GTP, GDP and possibly (p)ppGpp with moderate affinity, with high nucleotide exchange rates and a fairly low GTP hydrolysis rate. Plays a role in control of the cell cycle, stress response, ribosome biogenesis and in those bacteria that undergo differentiation, in morphogenesis control. The sequence is that of GTPase Obg from Chlamydia caviae (strain ATCC VR-813 / DSM 19441 / 03DC25 / GPIC) (Chlamydophila caviae).